The primary structure comprises 2547 residues: MKATAASGTPTPIAVVGMGCRFAGGATDPQALWKLLEQGGSTWSKTPSSRFNVSGVYHPNGQRVGSMHVRGGHFLDQDPALFDASFFNMTSEVASCMDPQQRLILEVVYEALEAAGIPLESVAGSNTAVFSGAMYHDYQDSLHRNPETLPRYFITGNAGTMMSSRVSHFYDLRGPSVTVDTACSTTLTALHLAIQSIRAGEADMAIVAGSNLLLNSDVFVTMSNLGFLSPDGISYSFDPRANGYGRGEGVAAIILKALPRALRDGDPIRLVVRETALNQDGRTPAITGPSPEAQACLIRECYQKAGLDPRQTSYVEAHGTGTPTGDPLELAAISAAFQGQPLQIGSVKANLGHTEAASGLASVMKVALALEKGIVPPSARFLQPSKKLLEERKFQIPLSSQLWLPIDGICRASINNFGFGGANAHAIVERYDPAARISTSKPNGHIRPHDSHVEADRGKIYVLSAKDEHSCQEMISRLRDYLNRANPTDERQFLANMAYTLASRRSNLRWKAACRAHSLASLLSVLVSDGTRPRRSAEKARLGWVFTGQGAQWFAMGRELIEAYPVFKEALIECDGYIKGMGANWSIIDELRRGEAESRVNEAEFSLPLSTAIQVALVRLLWSWGIRPAAITSHSSGEVAAAYAVGAFSARSAIGISYIRGALIAKTQPAPTTKGGMLAVGLSRSEVGEYITRVQQQGEEYLVVGCINSPSNVTVSGDLSAVVRLEELLHADQIFARRLKVTQAFHSHHMQPLSGEFREALVEVFNADITDTTNACQDVVYASPKTGKRLDDCNHLRDPMHWVESMLFPVEFESSFREMCFDRKDQAQEVDKIIEIGPHGVLSGAIKQILQLPELAAFDISYLSCLSRGKSAVDTIQLLAMDLLQGGYPVDLNAVNFPYGCEAAEVQVLSDLPTYPWNHKTRYWKEPRISRAARQRKIPVHDLIGVQEPLCPPLLHLWQNVLRISDVPWIRDHVVGSRILFPGAGFISMVIDGLSQICNHDPETCGLSYILRDVDLAQALILPTDGDEGVDLRLTIRAADQKSLGMRDWQRFSVYSIAGDKDDWTEHCTGLIRAQVDHPVSSSSIQQKTNPPQWSRKMAPQDLWASLHATGICHGPLFQNIERIESDGQASWCTLTVADTVATMPHAYESQHIVHPTTLDSAIQAAYTVLPFMGTLMKTAMVPSRIGGMKIPASFASLEPGDMLCAQAKIKNQGLSAFTTDVAVFNESDMDEEAGIELEGLTFQSLGAVISDSRRDLTENESTYSSWHWAPDITLTNSTWLERILSTGTQSQEIGVMLELRRCTVHFIQEAIENLTTEDVERLSGHLVKFYCWMQAQLACATNGELGQDSADWLRDSEQERQSLRSRVVAATNNGEMICRLGPKLSAILRGELDPLELMMDGQLLSRYYIRAIKWSRSNTQASELVRLCCHKNPRARILEIGGGTGGCTQLIVNALGPTKPVGRYDFTDVSAGFFEAARKRFSGWQDVMDFRKLDIEGDPEVQGFDCGSYDVVLACQVLHATSNMQRTLNNVRKLLKPGGKLILVETTRDQLDLFFTFGLLPGWWLSEEPERQLTPSLSPELWRSVLSATGFSGVDLEVRDCDSDEFYMISTMMSTATPGTPATTLNGPAEVLLVHAGSPPPMDWLQNLQVALGGKNSSITSLKALQGVSDLKGKMCVFLGEMDRTLLESVVSDDFTSLTSMLQYSQGTLWVTRGAAMASDDPRKALHLGLLRTLRNENHGRRFVSLDLDPLRDPWTAQSCDAIVNVLNAVGASHEKEFEYAERDGTIHVPRTFSDSSSSEKEDLVVLEPFQNETRLVRLDVQTPGLLDSLHFKLCSADEAWSSELPEDWVEIEPRAFGLNFRDIMVAMGQLESNRVMGFECAGVVTRLSKAATTGAGGLAIGDRVCALMKGHWASRVRTARTNVICIPGTLSFEQAASIPLAFTTAYTSLYTVARLQRGEKVLIHGGAGGVGQAAIILAQLVGAEVFTTAGTHSKRNFLIDKFKLAPDHVFSSRDSGFIEGIRACTNGKGVDVVLNSLAGPLLQYSFDCLVNFGRFVEIGKKDLEQNSRLNMATFARNVSFSSIDILYWEEAKSAEIFRALTEIMRLLEQKTIDLIGPISEYPMSAIEKAFRTMQSGQHVGKLVVATAETDMIPVRRGTMPVALKLDASYLIVGGLGGIGRRICEWMVDHGARHLLILSRSGRTDPFVTGLQKRGCVVRIHSCDVADESQLHAVLQQCHEDNMPPIRGIIQAAMVLKDALVSQMTADDFHVALRPKVQGSWNLHKIASEVDFFIMLSSLVGVMGGAGQANYAAAGAFQDALAQHRVAQGKPAVTIDLGMVKSIGYVAETDPAVAERLARIGYQPMHEEEVLAVLERAMSPSSSSAPPSSNPTIPASPAVIVTGINTGPGPHFTNADWMQEARFAGIKYRDPLKDDRGGALSSSQPADEDSVRARLSRASTEEEATALVVQVMGHRLVTMFGLTESEMSATQTLSSVGVDSLVAIELRNWITAQLNVDISVFELMEGRTIAEVAEVVVKKYGVGSKV.

The region spanning 10–430 is the Ketosynthase family 3 (KS3) domain; sequence PTPIAVVGMG…GANAHAIVER (421 aa). Residues Cys183, His318, and His353 each act as for beta-ketoacyl synthase activity in the active site. Residues 545 to 890 are acyl and malonyl transferase; sequence VFTGQGAQWF…MDLLQGGYPV (346 aa). Residue Ser635 is the For malonyltransferase activity of the active site. The tract at residues 941–1079 is N-terminal hotdog fold; that stretch reads HDLIGVQEPL…GLIRAQVDHP (139 aa). The PKS/mFAS DH domain maps to 941-1252; the sequence is HDLIGVQEPL…FQSLGAVISD (312 aa). The active-site Proton acceptor; for dehydratase activity is His973. The dehydratase-like stretch occupies residues 973-985; sequence HVVGSRILFPGAG. A C-terminal hotdog fold region spans residues 1095–1252; it reads SRKMAPQDLW…FQSLGAVISD (158 aa). Catalysis depends on Asp1160, which acts as the Proton donor; for dehydratase activity. Cysteines 1340 and 1379 form a disulfide. The segment at 1510–1547 is methyltransferase; sequence YDVVLACQVLHATSNMQRTLNNVRKLLKPGGKLILVET. In terms of domain architecture, Carrier spans 2459-2541; the sequence is ASTEEEATAL…EVAEVVVKKY (83 aa). O-(pantetheine 4'-phosphoryl)serine is present on Ser2501.

Pantetheine 4'-phosphate is required as a cofactor.

The catalysed reaction is holo-[2-methylbutanoate polyketide synthase] + 2 malonyl-CoA + S-adenosyl-L-methionine + 2 NADPH + 3 H(+) = (S)-2-methylbutanoyl-[2-methylbutanoate polyketide synthase] + S-adenosyl-L-homocysteine + 2 CO2 + 2 NADP(+) + 2 CoA + H2O. It participates in polyketide biosynthesis; lovastatin biosynthesis. Functionally, diketide synthase; part of the gene cluster that mediates the biosynthesis of monakolin K, also known as lovastatin, and which acts as a potent competitive inhibitor of HMG-CoA reductase. Monakolin K biosynthesis is performed in two stages. The first stage is catalyzed by the nonaketide synthase mokA, which belongs to type I polyketide synthases and catalyzes the iterative nine-step formation of the polyketide. This PKS stage completed by the action of dehydrogenase mokE, which catalyzes the NADPH-dependent reduction of the unsaturated tetra-, penta- and heptaketide intermediates that arise during the mokA-mediated biosynthesis of the nonaketide chain and leads to dihydromonacolin L. Covalently bound dihydromonacolin L is released from mokA by the mokD esterase. Conversion of dihydromonacolin L into monacolin L and then monacolin J is subsequently performed with the participation of molecular oxygen and P450 monoogygenase mokC. Finally, mokF performs the conversion of monacoline J to monacoline K through the addition of the side-chain diketide moiety (2R)-2-methylbutanoate produced by the diketide synthase mokB. This is Lovastatin diketide synthase mokB from Monascus pilosus (Red mold).